The following is a 116-amino-acid chain: MNDRITLAQAHCQPREKKEHKLGQARLAELLPQVPGWELSNNGHALTRTFQFDNYYRTLAFVNALAFIAHCEDHHPDMNVHYGRAVVCFSTHKIGGISEIDFICAAKTSALYEQGI.

This sequence belongs to the pterin-4-alpha-carbinolamine dehydratase family.

It carries out the reaction (4aS,6R)-4a-hydroxy-L-erythro-5,6,7,8-tetrahydrobiopterin = (6R)-L-erythro-6,7-dihydrobiopterin + H2O. This is Putative pterin-4-alpha-carbinolamine dehydratase from Xylella fastidiosa (strain M12).